Reading from the N-terminus, the 293-residue chain is Membrane protein RL13 (293 aa).

Positions 1–19 are cleaved as a signal peptide; it reads MHWHLAITWTVIILTFSEC. The chain crosses the membrane as a helical span at residues 245–265; the sequence is IPLGIHAVWAGIVVSVALIAL.

The protein localises to the virion membrane. Its function is as follows. May play a role in modifying tropism or in modulating cell signaling during virus entry. Since RL13 expression severely impairs HCMV replication in epithelial cell cultures, it may act as a regulator promoting persistence by suppressing the switch to fully lytic infection. The polypeptide is Membrane protein RL13 (RL13) (Human cytomegalovirus (strain Merlin) (HHV-5)).